A 306-amino-acid polypeptide reads, in one-letter code: Ornithine carbamoyltransferase (306 aa).

Carbamoyl phosphate contacts are provided by residues 50–53 (STRT), Q77, R101, and 128–131 (HPCQ). Residues N160, D224, and 228 to 229 (SM) contribute to the L-ornithine site. Residues 264-265 (CL) and R292 each bind carbamoyl phosphate.

This sequence belongs to the aspartate/ornithine carbamoyltransferase superfamily. OTCase family.

Its subcellular location is the cytoplasm. It carries out the reaction carbamoyl phosphate + L-ornithine = L-citrulline + phosphate + H(+). It functions in the pathway amino-acid biosynthesis; L-arginine biosynthesis; L-arginine from L-ornithine and carbamoyl phosphate: step 1/3. Reversibly catalyzes the transfer of the carbamoyl group from carbamoyl phosphate (CP) to the N(epsilon) atom of ornithine (ORN) to produce L-citrulline. The sequence is that of Ornithine carbamoyltransferase from Mycobacterium leprae (strain TN).